The primary structure comprises 282 residues: Ribosomal RNA small subunit methyltransferase A (282 aa).

H15, L17, G42, E64, D89, and N109 together coordinate S-adenosyl-L-methionine.

The protein belongs to the class I-like SAM-binding methyltransferase superfamily. rRNA adenine N(6)-methyltransferase family. RsmA subfamily.

Its subcellular location is the cytoplasm. The enzyme catalyses adenosine(1518)/adenosine(1519) in 16S rRNA + 4 S-adenosyl-L-methionine = N(6)-dimethyladenosine(1518)/N(6)-dimethyladenosine(1519) in 16S rRNA + 4 S-adenosyl-L-homocysteine + 4 H(+). Functionally, specifically dimethylates two adjacent adenosines (A1518 and A1519) in the loop of a conserved hairpin near the 3'-end of 16S rRNA in the 30S particle. May play a critical role in biogenesis of 30S subunits. This Prochlorococcus marinus (strain MIT 9211) protein is Ribosomal RNA small subunit methyltransferase A.